The following is a 119-amino-acid chain: Small capsomere-interacting protein (119 aa).

It belongs to the herpesviridae small capsomere-interacting protein family. Interacts with the major capsid protein/MCP.

It is found in the virion. The protein localises to the host nucleus. Participates in the assembly of the infectious particles by decorating the outer surface of the capsid shell and thus forming a layer between the capsid and the tegument. Complexes composed of the major capsid protein and small capsomere-interacting protein/SCP assemble together in the host cytoplasm and are translocated to the nucleus, where they accumulate and participate in capsid assembly. This chain is Small capsomere-interacting protein, found in Equine herpesvirus 1 (strain V592) (EHV-1).